A 1602-amino-acid chain; its full sequence is MAP kinase-activating death domain protein (1602 aa).

The uDENN domain maps to 13 to 267 (YLVIVGARHP…VPVSGQKRVD (255 aa)). Positions 105–121 (PKEKAEGGAGPRGKEGA) are enriched in basic and acidic residues. The tract at residues 105–167 (PKEKAEGGAG…GKRRAKAGNR (63 aa)) is disordered. Low complexity predominate over residues 126 to 137 (ASEEAATESSES). A compositionally biased stretch (polar residues) spans 138–156 (GSTLQPPSADSTPDVNQSP). S155 carries the phosphoserine modification. Residues 157–166 (RGKRRAKAGN) show a composition bias toward basic residues. One can recognise a cDENN domain in the interval 288–428 (RFTLVDFPLH…ESLELKKHLK (141 aa)). The dDENN domain maps to 430–564 (ALASMSLNTQ…LNPSNYAFQR (135 aa)). Disordered regions lie at residues 603 to 635 (ALSV…SSYS) and 676 to 840 (QPQK…NSTE). Residues 614-629 (SDPTDDSGSDSMDYDD) show a composition bias toward acidic residues. Phosphoserine is present on residues S688 and S691. Positions 688–698 (SENSQENLPLR) are enriched in polar residues. Over residues 699–711 (SSSSTTASSSPST) the composition is skewed to low complexity. Position 778 is a phosphoserine (S778). Positions 789–803 (ESYTPRFSQHASGSR) are enriched in polar residues. S812, S817, and S819 each carry phosphoserine. The span at 826–839 (RASSPNSTVSNNST) shows a compositional bias: low complexity. A phosphoserine mark is found at S857, S861, S895, S900, and S909. Disordered stretches follow at residues 870–920 (KGAR…SSEN), 1030–1089 (KEPD…DTRS), and 1113–1231 (TEEK…RSSE). The segment covering 911–920 (QGRSSNSSEN) has biased composition (polar residues). S1038 is modified (phosphoserine). 2 positions are modified to phosphothreonine: T1040 and T1045. S1089 is subject to Phosphoserine. The span at 1119 to 1134 (QISADSGVSLASASQR) shows a compositional bias: polar residues. Residues 1151-1162 (SSSQDSEVSNSS) are compositionally biased toward low complexity. Residues 1191-1209 (SRATLSDSEIETNSATSTI) show a composition bias toward polar residues. T1194 carries the phosphothreonine modification. A phosphoserine mark is found at S1196 and S1225. The 76-residue stretch at 1295–1370 (GMDQGPQEMI…GLVYSQQINE (76 aa)) folds into the Death domain.

It belongs to the MADD family. As to quaternary structure, interacts (via death domain) with TNFRSF1A (via death domain). Interacts with PIDD1. Interacts with YWHAZ. Interacts (via death domain) with KIF1B; links the motor KIF1B to Rab3-carrying vesicles in anterograde synaptic vesicle transport. Interacts with KIF1A. Interacts (via uDENN domain) with RAB3A, RAB3B, RAB3C and RAB3D; the GTP-bound form of the Rab proteins is preferred for interaction. Expressed in all tissues examined with the highest expression in brain.

The protein localises to the cell membrane. Its subcellular location is the cytoplasm. It localises to the cell projection. The protein resides in the axon. Guanyl-nucleotide exchange factor that regulates small GTPases of the Rab family. Converts GDP-bound inactive form of RAB27A and RAB27B to the GTP-bound active forms. Converts GDP-bound inactive form of RAB3A, RAB3C and RAB3D to the GTP-bound active forms, GTPases involved in synaptic vesicle exocytosis and vesicle secretion. Plays a role in synaptic vesicle formation and in vesicle trafficking at the neuromuscular junction. Involved in up-regulating a post-docking step of synaptic exocytosis in central synapses. Probably by binding to the motor proteins KIF1B and KIF1A, mediates motor-dependent transport of GTP-RAB3A-positive vesicles to the presynaptic nerve terminals. Plays a role in TNFA-mediated activation of the MAPK pathway, including ERK1/2. May link TNFRSF1A with MAP kinase activation. May be involved in the regulation of TNFA-induced apoptosis. In Rattus norvegicus (Rat), this protein is MAP kinase-activating death domain protein.